Here is a 370-residue protein sequence, read N- to C-terminus: ATP synthase gamma chain, chloroplastic (370 aa).

Residues 1–55 (MKFFCVAGLLASAAAFQAQPAAFTTYSPAVGGATSNVFSESSSPAHRNRRATIVM) constitute a chloroplast transit peptide. C145 is a catalytic residue.

Belongs to the ATPase gamma chain family. As to quaternary structure, F-type ATPases have 2 components, CF(1) - the catalytic core - and CF(0) - the membrane proton channel. CF(1) has five subunits: alpha(3), beta(3), gamma(1), delta(1), epsilon(1). CF(0) has four main subunits: a, b, b' and c.

It localises to the plastid. It is found in the chloroplast thylakoid membrane. In terms of biological role, produces ATP from ADP in the presence of a proton gradient across the membrane. The gamma chain is believed to be important in regulating ATPase activity and the flow of protons through the CF(0) complex. This chain is ATP synthase gamma chain, chloroplastic (ATPC), found in Trieres chinensis (Marine centric diatom).